The following is a 480-amino-acid chain: Iroquois-class homeodomain protein IRX-1 (480 aa).

The segment at residues 125–188 (YGDPGRPKNA…ANARRRLKKE (64 aa)) is a DNA-binding region (homeobox; TALE-type). Disordered regions lie at residues 190–268 (KVTW…QGSP), 280–354 (SPLG…PLQH), and 401–480 (PHGP…LPSA). The span at 210 to 228 (TEGDPEKAEDDEEIDLESI) shows a compositional bias: acidic residues. Over residues 229-239 (DIDKIDEHDGD) the composition is skewed to basic and acidic residues. A Phosphoserine modification is found at Ser-241. Composition is skewed to low complexity over residues 252–262 (PHAPAAPSALA) and 340–351 (HPGAHGPSAGAP). Residues 404-417 (PHLPAPPPPQPPVA) show a composition bias toward pro residues.

Belongs to the TALE/IRO homeobox family.

It is found in the nucleus. This is Iroquois-class homeodomain protein IRX-1 (IRX1) from Homo sapiens (Human).